Consider the following 319-residue polypeptide: Proline hydroxylase buaE (319 aa).

One can recognise a Fe2OG dioxygenase domain in the interval 168–280; sequence NSSELRLNHY…RYSIAYFGKP (113 aa). The Fe cation site is built by H195, D197, and H255. R271 provides a ligand contact to 2-oxoglutarate.

This sequence belongs to the iron/ascorbate-dependent oxidoreductase family. It depends on Fe(2+) as a cofactor.

Its pathway is mycotoxin biosynthesis. Proline hydroxylase; part of the gene cluster that mediates the biosynthesis of burnettramic acids, an unusual class of bolaamphiphilic pyrrolizidinediones that display potent antibacterial, antifungal, and cytotoxic activities. The first step of the biosynthesis of burnettramic acids is the hydroxylation of proline by the proline hydroxylase buaE to generate 4-hydroxyproline. The PKS-NRPS buaA and trans-enoyl reductase buaC construct the highly reduced polyketide chain, and the condensation (C) domain of buaA then catalyzes the amide bond formation with the activated 4-hydroxyproline. This is followed by the R domain releasing the nascent polyketide-peptide directly via a Dieckmann condensation to afford a tetramic acid fused to the hydroxyproline, generating the bicyclic pyrrolidinedione moiety. The cytochrome P450 monooxygenases buaD and buaG are likely responsible for the multiple hydroxylations on the polyketide chain and its terminus, although in the heterologous context, buaD does not appear to be required. Therefore, while buaG may be a multifunctional cytochrome P450 monooxygenase, it cannot be ruled out that the two secondary alcohols on the polyketide chain could have an acetate origin. Finally, the glycosyltransferase buaB transfers beta-D-mannose to the aglycone burnettramic acid A to form burnettramic acid A. Burnettramic acid B is a minor cis-pyrrolizidine epimer of burnettramic acid A and it is likely that small amounts of it form naturally in acidic environments. This Petromyces alliaceus (Aspergillus alliaceus) protein is Proline hydroxylase buaE.